The following is a 323-amino-acid chain: Cyclin-dependent kinase 1 (323 aa).

In terms of domain architecture, Protein kinase spans Tyr4 to Phe306. Residues Ile10–Val18 and Lys34 each bind ATP. Thr14 carries the post-translational modification Phosphothreonine. At Tyr15 the chain carries Phosphotyrosine. Asp147 functions as the Proton acceptor in the catalytic mechanism. Thr180 is modified (phosphothreonine; by CAK).

Belongs to the protein kinase superfamily. CMGC Ser/Thr protein kinase family. CDC2/CDKX subfamily. In terms of assembly, forms a stable but non-covalent complex with a regulatory subunit (SUC1) and with a cyclin.

It catalyses the reaction L-seryl-[protein] + ATP = O-phospho-L-seryl-[protein] + ADP + H(+). It carries out the reaction L-threonyl-[protein] + ATP = O-phospho-L-threonyl-[protein] + ADP + H(+). With respect to regulation, phosphorylation at Thr-14 or Tyr-15 inactivates the enzyme, while phosphorylation at Thr-180 activates it. Cyclin-dependent kinase that acts as a master regulator of the mitotic and meiotic cell cycles. The protein is Cyclin-dependent kinase 1 of Emericella nidulans (strain FGSC A4 / ATCC 38163 / CBS 112.46 / NRRL 194 / M139) (Aspergillus nidulans).